Here is a 108-residue protein sequence, read N- to C-terminus: Putative DNA-directed RNA polymerase subunit 1 inactive homolog (108 aa).

The chain is Putative DNA-directed RNA polymerase subunit 1 inactive homolog from Acanthamoeba polyphaga (Amoeba).